A 363-amino-acid polypeptide reads, in one-letter code: Insulin gene enhancer protein ISL-3 (363 aa).

2 LIM zinc-binding domains span residues 27–80 and 89–143; these read CVGC…CKRD and CAKC…RADH. Residues 191–250 constitute a DNA-binding region (homeobox); sequence TTRVRTVLNEKQLHTLRTCYNANPRPDALMREQLVEMTGLSPRVIRVWFQNKRCKDKKRS. Residues 328–363 are disordered; that stretch reads FSESGSLGNSSGSDVTSLSSHLPDTPNSMVPSPVET. Positions 329–340 are enriched in low complexity; it reads SESGSLGNSSGS. Positions 341-363 are enriched in polar residues; that stretch reads DVTSLSSHLPDTPNSMVPSPVET.

The protein resides in the nucleus. Its function is as follows. Binds to one of the cis-acting domain of the insulin gene enhancer. May be involved in subtype specialization of primary motoneurons. The protein is Insulin gene enhancer protein ISL-3 (isl3) of Oncorhynchus tshawytscha (Chinook salmon).